Consider the following 343-residue polypeptide: Cell division protein ZipA (343 aa).

The Periplasmic portion of the chain corresponds to 1 to 4 (MDLN). Residues 5–25 (TILIILGILALIGLVAHGIWS) traverse the membrane as a helical segment. Topologically, residues 26–343 (NRREKSQYFD…MAEAAYLARV (318 aa)) are cytoplasmic. A disordered region spans residues 39–98 (AFHRNPQSTGRPSAQASQPMTPNFAQPAKETEQIRQTYQEPQVRQMSSSPEQQTRPTAQA). Polar residues-rich tracts occupy residues 43-62 (NPQS…TPNF) and 72-95 (IRQT…TRPT).

The protein belongs to the ZipA family. In terms of assembly, interacts with FtsZ via their C-terminal domains.

The protein resides in the cell inner membrane. Essential cell division protein that stabilizes the FtsZ protofilaments by cross-linking them and that serves as a cytoplasmic membrane anchor for the Z ring. Also required for the recruitment to the septal ring of downstream cell division proteins. The sequence is that of Cell division protein ZipA from Actinobacillus succinogenes (strain ATCC 55618 / DSM 22257 / CCUG 43843 / 130Z).